A 241-amino-acid polypeptide reads, in one-letter code: Carboxy-S-adenosyl-L-methionine synthase (241 aa).

Residues tyrosine 38, glycine 63–serine 65, aspartate 88–asparagine 89, aspartate 116–isoleucine 117, asparagine 131, and arginine 198 each bind S-adenosyl-L-methionine.

It belongs to the class I-like SAM-binding methyltransferase superfamily. Cx-SAM synthase family. Homodimer.

It carries out the reaction prephenate + S-adenosyl-L-methionine = carboxy-S-adenosyl-L-methionine + 3-phenylpyruvate + H2O. Functionally, catalyzes the conversion of S-adenosyl-L-methionine (SAM) to carboxy-S-adenosyl-L-methionine (Cx-SAM). The chain is Carboxy-S-adenosyl-L-methionine synthase from Histophilus somni (strain 129Pt) (Haemophilus somnus).